Here is a 223-residue protein sequence, read N- to C-terminus: Ribonuclease T (223 aa).

The 175-residue stretch at Val20–Phe194 folds into the Exonuclease domain. 4 residues coordinate Mg(2+): Asp23, Glu25, His181, and Asp186. His181 serves as the catalytic Proton donor/acceptor.

Belongs to the RNase T family. As to quaternary structure, homodimer. The cofactor is Mg(2+).

Functionally, trims short 3' overhangs of a variety of RNA species, leaving a one or two nucleotide 3' overhang. Responsible for the end-turnover of tRNA: specifically removes the terminal AMP residue from uncharged tRNA (tRNA-C-C-A). Also appears to be involved in tRNA biosynthesis. This is Ribonuclease T from Shewanella baltica (strain OS155 / ATCC BAA-1091).